The chain runs to 89 residues: Putative antitoxin VapB42 (89 aa).

Possibly the antitoxin component of a type II toxin-antitoxin (TA) system. Its cognate toxin is VapC42 (Potential). This chain is Putative antitoxin VapB42 (vapB42), found in Mycobacterium tuberculosis (strain CDC 1551 / Oshkosh).